The primary structure comprises 227 residues: Holliday junction branch migration complex subunit RuvA (227 aa).

The interval 1-64 is domain I; that stretch reads MFESISGILT…EDALRLFGFS (64 aa). Residues 65–143 form a domain II region; the sequence is NVQERTLFLS…LTDAASCAQS (79 aa). The segment at 144-158 is flexible linker; the sequence is QTDDRAAHPSNLGCA. Residues 159 to 227 are domain III; sequence PHAREIEDLV…HPHAVAPAAE (69 aa).

This sequence belongs to the RuvA family. In terms of assembly, homotetramer. Forms an RuvA(8)-RuvB(12)-Holliday junction (HJ) complex. HJ DNA is sandwiched between 2 RuvA tetramers; dsDNA enters through RuvA and exits via RuvB. An RuvB hexamer assembles on each DNA strand where it exits the tetramer. Each RuvB hexamer is contacted by two RuvA subunits (via domain III) on 2 adjacent RuvB subunits; this complex drives branch migration. In the full resolvosome a probable DNA-RuvA(4)-RuvB(12)-RuvC(2) complex forms which resolves the HJ.

The protein localises to the cytoplasm. Its function is as follows. The RuvA-RuvB-RuvC complex processes Holliday junction (HJ) DNA during genetic recombination and DNA repair, while the RuvA-RuvB complex plays an important role in the rescue of blocked DNA replication forks via replication fork reversal (RFR). RuvA specifically binds to HJ cruciform DNA, conferring on it an open structure. The RuvB hexamer acts as an ATP-dependent pump, pulling dsDNA into and through the RuvAB complex. HJ branch migration allows RuvC to scan DNA until it finds its consensus sequence, where it cleaves and resolves the cruciform DNA. This Treponema pallidum (strain Nichols) protein is Holliday junction branch migration complex subunit RuvA.